Consider the following 504-residue polypeptide: Subtilisin-like protease 1 (504 aa).

Positions 1-19 (MGVFRFISISLAAVSAANA) are cleaved as a signal peptide. The propeptide occupies 20–116 (AQILSMPHAQ…VEPDTIVSVH (97 aa)). The region spanning 34 to 116 (SYIVMMKDDT…VEPDTIVSVH (83 aa)) is the Inhibitor I9 domain. One can recognise a Peptidase S8 domain in the interval 126-400 (SWGLARISNP…NVLINNGGAK (275 aa)). Active-site charge relay system residues include Asp158 and His190. The segment at 172–198 (AIWGSNQVNDGDDRDGSGHGTHTSGTM) is disordered. N-linked (GlcNAc...) asparagine glycans are attached at residues Asn233 and Asn251. The segment covering 282–294 (NDNQDAQSSSPAS) has biased composition (polar residues). The tract at residues 282–312 (NDNQDAQSSSPASEPSVCTVGSSAEDDSRSS) is disordered. The Charge relay system role is filled by Ser345. Residues 378–394 (TSSITDAGPGTPTNVLI) are compositionally biased toward polar residues. The interval 378–483 (TSSITDAGPG…YPGGDNFDFD (106 aa)) is disordered. Pro residues-rich tracts occupy residues 405-449 (NPNP…PGQP) and 457-473 (APAP…PHTP).

The protein belongs to the peptidase S8 family.

It is found in the secreted. Its function is as follows. Secreted subtilisin-like serine protease with keratinolytic activity that contributes to pathogenicity. The polypeptide is Subtilisin-like protease 1 (SUB1) (Trichophyton rubrum (Athlete's foot fungus)).